The following is a 306-amino-acid chain: Putative syntaxin-3 (306 aa).

Residues 1–279 are Cytoplasmic-facing; it reads MPRDRLKELQ…QKRARKMKVC (279 aa). The interval 40-180 is required for the regulation of the defecation motor program; sequence QDADFEMFLE…QLSDEEIENA (141 aa). A t-SNARE coiled-coil homology domain is found at 204–266; it reads YDEVKSRADE…KQARGNVEEA (63 aa). The helical; Anchor for type IV membrane protein transmembrane segment at 280–300 threads the bilayer; sequence IIIGSIIAVLILILFIQSAVC. At 301–306 the chain is on the extracellular side; it reads HFTPIC.

This sequence belongs to the syntaxin family. In terms of tissue distribution, expressed in body wall, pharyngeal, vulval and enteric muscles and in some head neurons.

The protein resides in the cell membrane. Potentially involved in docking of synaptic vesicles at presynaptic active zones. Acts in the intestine to regulate anterior body muscle contractions (aBOC) and the expulsion steps during the defecation motor program (DMP). This is Putative syntaxin-3 from Caenorhabditis elegans.